The following is an 853-amino-acid chain: WEB family protein At5g16730, chloroplastic (853 aa).

2 stretches are compositionally biased toward low complexity: residues 1–27 (MASK…PATP) and 36–49 (KSET…STTT). Residues 1–84 (MASKTKTSLS…PTPPEKSQAR (84 aa)) constitute a chloroplast transit peptide. Disordered regions lie at residues 1 to 106 (MASK…IKED), 386 to 465 (KEDL…SKKA), 666 to 765 (LAKK…SVEV), and 778 to 820 (KEAF…ALTA). Residues 92 to 101 (ESPQTTTRLS) show a composition bias toward polar residues. The stretch at 94–670 (PQTTTRLSQI…LEEAILAKKQ (577 aa)) forms a coiled coil. Composition is skewed to basic and acidic residues over residues 402–465 (EVSK…SKKA), 698–718 (NGHR…HEPP), and 732–753 (MEEK…KKDE). Residues 754–763 (SQDDDKDDSV) show a composition bias toward acidic residues. Residues 778 to 788 (KEAFPDKKSEL) show a composition bias toward basic and acidic residues. A Phosphoserine modification is found at serine 790. Basic and acidic residues predominate over residues 797–807 (SSKIDESDKTS).

This sequence belongs to the WEB family.

It is found in the plastid. It localises to the chloroplast. The polypeptide is WEB family protein At5g16730, chloroplastic (Arabidopsis thaliana (Mouse-ear cress)).